Reading from the N-terminus, the 150-residue chain is Aspartate 1-decarboxylase (150 aa).

S25 (schiff-base intermediate with substrate; via pyruvic acid) is an active-site residue. S25 is modified (pyruvic acid (Ser)). T57 serves as a coordination point for substrate. Residue Y58 is the Proton donor of the active site. 73–75 (GAA) lines the substrate pocket.

Belongs to the PanD family. As to quaternary structure, heterooctamer of four alpha and four beta subunits. It depends on pyruvate as a cofactor. Post-translationally, is synthesized initially as an inactive proenzyme, which is activated by self-cleavage at a specific serine bond to produce a beta-subunit with a hydroxyl group at its C-terminus and an alpha-subunit with a pyruvoyl group at its N-terminus.

The protein localises to the cytoplasm. It catalyses the reaction L-aspartate + H(+) = beta-alanine + CO2. The protein operates within cofactor biosynthesis; (R)-pantothenate biosynthesis; beta-alanine from L-aspartate: step 1/1. Functionally, catalyzes the pyruvoyl-dependent decarboxylation of aspartate to produce beta-alanine. The protein is Aspartate 1-decarboxylase of Kocuria rhizophila (strain ATCC 9341 / DSM 348 / NBRC 103217 / DC2201).